Here is a 125-residue protein sequence, read N- to C-terminus: Putative RNA polymerase sigma-G factor (125 aa).

This sequence belongs to the sigma-70 factor family.

In terms of biological role, sigma factors are initiation factors that promote the attachment of RNA polymerase to specific initiation sites and are then released. The protein is Putative RNA polymerase sigma-G factor of Bacillus thuringiensis subsp. kurstaki.